A 782-amino-acid chain; its full sequence is LINE-1 type transposase domain-containing protein 1 (782 aa).

3 disordered regions span residues 1 to 30 (MSGVQSKAARLQKERKEKLSADRERKTATS), 90 to 200 (QEGD…GGAG), and 338 to 397 (NKGT…SAEE). Composition is skewed to basic and acidic residues over residues 11-27 (LQKERKEKLSADRERKT) and 95-107 (ISERPKPGEKVEE). Ser-136 is modified (phosphoserine). Composition is skewed to basic and acidic residues over residues 143-158 (SLERGGEALRGEHGRC) and 183-194 (EENRLKAPKESP). Residues 347-396 (GEEEEISETQGEETSEGETSELGEEEGSESEEEEESSESEEEEESSESAE) show a composition bias toward acidic residues. Phosphoserine occurs at positions 407, 409, 442, 478, 490, 559, and 567.

It belongs to the transposase 22 family.

This chain is LINE-1 type transposase domain-containing protein 1 (L1td1), found in Mus musculus (Mouse).